We begin with the raw amino-acid sequence, 93 residues long: uncharacterized protein (93 aa).

Residues D25–K68 adopt a coiled-coil conformation.

This is an uncharacterized protein from Dictyostelium discoideum (Social amoeba).